The following is a 547-amino-acid chain: Eukaryotic translation initiation factor 3 subunit D (547 aa).

2 disordered regions span residues 1–22 and 114–159; these read MANF…PSTS and SVRG…TRDS. Over residues 126–148 the composition is skewed to gly residues; the sequence is GRGGQRGGFSTRGGRGGARGGYG. The interval 284-298 is RNA gate; sequence PLDYITVNENAADPP.

Belongs to the eIF-3 subunit D family. As to quaternary structure, component of the eukaryotic translation initiation factor 3 (eIF-3) complex.

It localises to the cytoplasm. MRNA cap-binding component of the eukaryotic translation initiation factor 3 (eIF-3) complex, which is involved in protein synthesis of a specialized repertoire of mRNAs and, together with other initiation factors, stimulates binding of mRNA and methionyl-tRNAi to the 40S ribosome. The eIF-3 complex specifically targets and initiates translation of a subset of mRNAs involved in cell proliferation. In the eIF-3 complex, eif3d specifically recognizes and binds the 7-methylguanosine cap of a subset of mRNAs. The chain is Eukaryotic translation initiation factor 3 subunit D from Cryptococcus neoformans var. neoformans serotype D (strain B-3501A) (Filobasidiella neoformans).